Here is a 639-residue protein sequence, read N- to C-terminus: Threonine--tRNA ligase (639 aa).

Positions 1–61 (MINITLKDGK…KEDSELEILT (61 aa)) constitute a TGS domain. Residues 242-532 (DHRKLGKELD…LIEHFAGAFP (291 aa)) are catalytic. Zn(2+)-binding residues include Cys-333, His-384, and His-509.

This sequence belongs to the class-II aminoacyl-tRNA synthetase family. As to quaternary structure, homodimer. The cofactor is Zn(2+).

Its subcellular location is the cytoplasm. The catalysed reaction is tRNA(Thr) + L-threonine + ATP = L-threonyl-tRNA(Thr) + AMP + diphosphate + H(+). Its function is as follows. Catalyzes the attachment of threonine to tRNA(Thr) in a two-step reaction: L-threonine is first activated by ATP to form Thr-AMP and then transferred to the acceptor end of tRNA(Thr). Also edits incorrectly charged L-seryl-tRNA(Thr). The chain is Threonine--tRNA ligase from Clostridium tetani (strain Massachusetts / E88).